The sequence spans 177 residues: Large ribosomal subunit protein uL6 (177 aa).

The protein belongs to the universal ribosomal protein uL6 family. In terms of assembly, part of the 50S ribosomal subunit.

Its function is as follows. This protein binds to the 23S rRNA, and is important in its secondary structure. It is located near the subunit interface in the base of the L7/L12 stalk, and near the tRNA binding site of the peptidyltransferase center. The polypeptide is Large ribosomal subunit protein uL6 (Nitrosospira multiformis (strain ATCC 25196 / NCIMB 11849 / C 71)).